The primary structure comprises 412 residues: MATTTTSWEELLGSKNWDTILDPLDQSLRELILRCGDFCQATYDAFVNDQNSKYCGASRYGKSSFFDKVMLENASDYEVVNFLYATARVSLPEGLLLQSQSRDSWDRESNWFGYIAVTSDERSKALGRREIYIALRGTSRNYEWVNVLGARPTSADPLLHGPEQDGSGGVVEGTTFDSDSEDEEGCKVMLGWLTIYTSNHPESKFTKLSLRSQLLAKIKELLLKYKDEKPSIVLTGHSLGATEAVLAAYDIAENGSSDDVPVTAIVFGCPQVGNKEFRDEVMSHKNLKILHVRNTIDLLTRYPGGLLGYVDIGINFVIDTKKSPFLSDSRNPGDWHNLQAMLHVVAGWNGKKGEFKLMVKRSIALVNKSCEFLKAECLVPGSWWVEKNKGLIKNEDGEWVLAPVEEEPVPEF.

The residue at position 2 (Ala-2) is an N-acetylalanine. Ser-238 functions as the Acyl-ester intermediate in the catalytic mechanism. Active-site charge relay system residues include Ser-238, Asp-297, and His-336.

Belongs to the AB hydrolase superfamily. Lipase family. As to expression, expressed in leaves, stems, flowers and siliques, and, at low levels, in seeds and roots (at protein level).

It is found in the cytoplasm. Its function is as follows. Acylhydrolase that catalyzes the hydrolysis of phosphatidylcholine (PC) at the sn-1 position. High activity toward PC, medium activity toward monogalactosyldiacylglycerol (MGDG) and low activity toward triacylglycerol (TAG). Confers sensitivity to UV-B radiation probably by deesterifying membrane phospholipids. This Arabidopsis thaliana (Mouse-ear cress) protein is Phospholipase A1-IIdelta.